Here is a 212-residue protein sequence, read N- to C-terminus: MQLFHLCLIISCTCPTVQASKLCLGWLWGMDIDPYKEFGATVELLSFLPSDFFPSVRDLLDTASALYREALESPEHCSPHHTALRQAILCWGELMTLATWVGVNLEDPASRDLVVSYVNTNMGLKFRQLLWFHISCLTFGRETVIEYLVAFGVWIRTPPAYRPPNAPILSTLPETTVVRRRGRSPRRRTPSPRRRRSQSPRRRRSQSRESQC.

Positions 1-19 are cleaved as a signal peptide; that stretch reads MQLFHLCLIISCTCPTVQA. The segment at 25–27 is HBEAG; that stretch reads GWL. Positions 165-212 are disordered; the sequence is NAPILSTLPETTVVRRRGRSPRRRTPSPRRRRSQSPRRRRSQSRESQC. The segment covering 178–205 has biased composition (basic residues); that stretch reads VRRRGRSPRRRTPSPRRRRSQSPRRRRS. The stretch at 184–190 is one 1; half-length repeat; the sequence is SPRRRTP. The tract at residues 184-206 is 3 X 8 AA repeats of S-P-R-R-R-R-S-Q; it reads SPRRRTPSPRRRRSQSPRRRRSQ. A propeptide spanning residues 184-212 is cleaved from the precursor; it reads SPRRRTPSPRRRRSQSPRRRRSQSRESQC. Repeat copies occupy residues 191–198 and 199–206.

The protein belongs to the orthohepadnavirus precore antigen family. In terms of assembly, homodimerizes. Phosphorylated. In terms of processing, cleaved by host furin.

The protein resides in the secreted. It is found in the host nucleus. In terms of biological role, may regulate immune response to the intracellular capsid in acting as a T-cell tolerogen, by having an immunoregulatory effect which prevents destruction of infected cells by cytotoxic T-cells. This immune regulation may predispose to chronicity during perinatal infections and prevent severe liver injury during adult infections. The sequence is that of External core antigen from Hepatitis B virus genotype D subtype ayw (isolate Italy/CI/1992) (HBV-D).